The following is a 396-amino-acid chain: L-lactate dehydrogenase (396 aa).

An FMN hydroxy acid dehydrogenase domain is found at 1–380 (MIISAASDYR…SQDSLVQELD (380 aa)). A substrate-binding site is contributed by tyrosine 24. Serine 106 and glutamine 127 together coordinate FMN. Residue tyrosine 129 participates in substrate binding. Threonine 155 contacts FMN. A substrate-binding site is contributed by arginine 164. Lysine 251 contacts FMN. Histidine 275 acts as the Proton acceptor in catalysis. Arginine 278 serves as a coordination point for substrate. 306-330 (DSGIRNGLDVVRMIALGADTVLLGR) provides a ligand contact to FMN.

It belongs to the FMN-dependent alpha-hydroxy acid dehydrogenase family. The cofactor is FMN.

It localises to the cell inner membrane. The catalysed reaction is (S)-lactate + A = pyruvate + AH2. In terms of biological role, catalyzes the conversion of L-lactate to pyruvate. Is coupled to the respiratory chain. The protein is L-lactate dehydrogenase of Escherichia fergusonii (strain ATCC 35469 / DSM 13698 / CCUG 18766 / IAM 14443 / JCM 21226 / LMG 7866 / NBRC 102419 / NCTC 12128 / CDC 0568-73).